The following is a 419-amino-acid chain: Prolyl hydroxylase EGLN2 (419 aa).

2 stretches are compositionally biased toward low complexity: residues Met1–Pro18 and Thr64–Ala73. 2 disordered regions span residues Met1–Trp89 and Ala108–Val181. The Bipartite nuclear localization signal motif lies at Trp89 to Arg134. Positions Glu115–Gly126 are enriched in basic and acidic residues. Ser130 bears the Phosphoserine mark. Residues Ser154–Ser174 show a composition bias toward low complexity. The segment at Val237–Ile247 is beta(2)beta(3) 'finger-like' loop. The region spanning Gly290–Asp388 is the Fe2OG dioxygenase domain. Residues His309, Asp311, and His370 each contribute to the Fe cation site. 2-oxoglutarate is bound at residue Arg379.

As to quaternary structure, interacts with E3 ligase SIAH2. Interacts with LIMD1, WTIP and AJUBA. Fe(2+) is required as a cofactor. Requires L-ascorbate as cofactor. Ubiquitinated by SIAH1 and/or SIAH2 in response to the unfolded protein response (UPR), leading to its degradation. As to expression, highly expressed in testis, expression was also detected in the heart brain, liver kidney and lung. Expression was lowest in spleen and skeletal muscle. Constitutively expressed during differentiation of C2C12 skeletal myocytes.

The protein resides in the nucleus. The enzyme catalyses L-prolyl-[protein] + 2-oxoglutarate + O2 = trans-4-hydroxy-L-prolyl-[protein] + succinate + CO2. It carries out the reaction L-prolyl-[hypoxia-inducible factor alpha subunit] + 2-oxoglutarate + O2 = trans-4-hydroxy-L-prolyl-[hypoxia-inducible factor alpha subunit] + succinate + CO2. In terms of biological role, prolyl hydroxylase that mediates hydroxylation of proline residues in target proteins, such as ATF4, IKBKB, CEP192 and HIF1A. Target proteins are preferentially recognized via a LXXLAP motif. Cellular oxygen sensor that catalyzes, under normoxic conditions, the post-translational formation of 4-hydroxyproline in hypoxia-inducible factor (HIF) alpha proteins. Hydroxylates a specific proline found in each of the oxygen-dependent degradation (ODD) domains (N-terminal, NODD, and C-terminal, CODD) of HIF1A. Also hydroxylates HIF2A. Has a preference for the CODD site for both HIF1A and HIF2A. Hydroxylated HIFs are then targeted for proteasomal degradation via the von Hippel-Lindau ubiquitination complex. Under hypoxic conditions, the hydroxylation reaction is attenuated allowing HIFs to escape degradation resulting in their translocation to the nucleus, heterodimerization with HIF1B, and increased expression of hypoxy-inducible genes. EGLN2 is involved in regulating hypoxia tolerance and apoptosis in cardiac and skeletal muscle. Also regulates susceptibility to normoxic oxidative neuronal death. Links oxygen sensing to cell cycle and primary cilia formation by hydroxylating the critical centrosome component CEP192 which promotes its ubiquitination and subsequent proteasomal degradation. Hydroxylates IKBKB, mediating NF-kappa-B activation in hypoxic conditions. Also mediates hydroxylation of ATF4, leading to decreased protein stability of ATF4. The polypeptide is Prolyl hydroxylase EGLN2 (Mus musculus (Mouse)).